The chain runs to 448 residues: Bifunctional protein GlmU (448 aa).

The pyrophosphorylase stretch occupies residues M1–R232. Residues L11–G14, K25, Q78, and G83–T84 contribute to the UDP-N-acetyl-alpha-D-glucosamine site. A Mg(2+)-binding site is contributed by D108. UDP-N-acetyl-alpha-D-glucosamine contacts are provided by G144, E158, N173, and N230. A Mg(2+)-binding site is contributed by N230. Residues V233 to G253 are linker. Residues G254–G448 form an N-acetyltransferase region. Residues R319 and K337 each contribute to the UDP-N-acetyl-alpha-D-glucosamine site. Catalysis depends on H349, which acts as the Proton acceptor. Residues Y352 and N363 each coordinate UDP-N-acetyl-alpha-D-glucosamine. Acetyl-CoA-binding positions include A366, N372–Y373, T409, and R426.

This sequence in the N-terminal section; belongs to the N-acetylglucosamine-1-phosphate uridyltransferase family. The protein in the C-terminal section; belongs to the transferase hexapeptide repeat family. As to quaternary structure, homotrimer. Mg(2+) serves as cofactor.

Its subcellular location is the cytoplasm. It carries out the reaction alpha-D-glucosamine 1-phosphate + acetyl-CoA = N-acetyl-alpha-D-glucosamine 1-phosphate + CoA + H(+). The enzyme catalyses N-acetyl-alpha-D-glucosamine 1-phosphate + UTP + H(+) = UDP-N-acetyl-alpha-D-glucosamine + diphosphate. Its pathway is nucleotide-sugar biosynthesis; UDP-N-acetyl-alpha-D-glucosamine biosynthesis; N-acetyl-alpha-D-glucosamine 1-phosphate from alpha-D-glucosamine 6-phosphate (route II): step 2/2. The protein operates within nucleotide-sugar biosynthesis; UDP-N-acetyl-alpha-D-glucosamine biosynthesis; UDP-N-acetyl-alpha-D-glucosamine from N-acetyl-alpha-D-glucosamine 1-phosphate: step 1/1. It participates in bacterial outer membrane biogenesis; LPS lipid A biosynthesis. Its function is as follows. Catalyzes the last two sequential reactions in the de novo biosynthetic pathway for UDP-N-acetylglucosamine (UDP-GlcNAc). The C-terminal domain catalyzes the transfer of acetyl group from acetyl coenzyme A to glucosamine-1-phosphate (GlcN-1-P) to produce N-acetylglucosamine-1-phosphate (GlcNAc-1-P), which is converted into UDP-GlcNAc by the transfer of uridine 5-monophosphate (from uridine 5-triphosphate), a reaction catalyzed by the N-terminal domain. The protein is Bifunctional protein GlmU of Xanthobacter autotrophicus (strain ATCC BAA-1158 / Py2).